The following is a 452-amino-acid chain: Keratin, type II cytoskeletal 80 (452 aa).

A head region spans residues 1–82 (MAYRSCVVGF…DPAVQQQKNQ (82 aa)). Residue serine 45 is modified to Phosphoserine. The coil 1A stretch occupies residues 82 to 118 (QEKEEMKVLNDKFASLIGKVQALEQRNQLLETRWGFL). Residues 83–394 (EKEEMKVLND…KLMEGEESRM (312 aa)) form the IF rod domain. Positions 119–135 (QGQGSATFDLSHHYETF) are linker 1. The tract at residues 136–227 (QGRLQEELRK…TVYEQELKDL (92 aa)) is coil 1B. The interval 228–251 (TAQVKDVSVTVGLDSRCHIDLSGI) is linker 12. A coil 2 region spans residues 252–390 (VEEVKAQYDA…ATYHKLMEGE (139 aa)). Residues 391–452 (ESRMDLPSTT…YLSQESEASE (62 aa)) form a tail region. Composition is skewed to polar residues over residues 411–421 (TTASKSGLSKT) and 443–452 (YLSQESEASE). The segment at 411 to 452 (TTASKSGLSKTPSRKKKNRGGPVIKITEMSEKYLSQESEASE) is disordered.

It belongs to the intermediate filament family. Heterotetramer of two type I and two type II keratins.

The protein is Keratin, type II cytoskeletal 80 (Krt80) of Rattus norvegicus (Rat).